A 570-amino-acid polypeptide reads, in one-letter code: MFS-type transporter pigP (570 aa).

The tract at residues 14-54 (GMIKKAHPEQTPPDVSHEGDVATEKGDSDGVEQAAPTGPTD) is disordered. Positions 28-41 (VSHEGDVATEKGDS) are enriched in basic and acidic residues. 7 helical membrane-spanning segments follow: residues 65–85 (VMIM…TSII), 99–119 (LPDV…LVPL), 131–151 (WSFV…GVAT), 162–182 (VAGM…AGCV), 192–212 (GLLM…GGAF), 221–241 (CFYI…FVHI), and 263–283 (LVGF…LQYG). A glycan (N-linked (GlcNAc...) asparagine) is linked at Asn290. 7 helical membrane passes run 293-313 (VVIG…LWEW), 336-356 (VVYG…PIYF), 369-389 (VYIL…GALV), 392-412 (FGYY…GNGL), 425-445 (WIGY…MPII), 455-475 (LIPV…STFL), and 533-553 (VFYL…GMGW).

It belongs to the major facilitator superfamily. TCR/Tet family.

It localises to the cell membrane. MFS-type transporter; part of the gene cluster that mediates the biosynthesis of azaphilone pigments (MonAzPs), very widely used as food colorant. The polypeptide is MFS-type transporter pigP (Monascus ruber (Mold)).